Consider the following 122-residue polypeptide: WUSCHEL-related homeobox 7 (122 aa).

A DNA-binding region (homeobox; WUS-type) is located at residues 25-89 (AKCGRWNPTV…NHKARERQKC (65 aa)). The span at 98-111 (DHRQDTDLSKPRRD) shows a compositional bias: basic and acidic residues. Positions 98–122 (DHRQDTDLSKPRRDNVRRHQLPAKG) are disordered. The span at 112-122 (NVRRHQLPAKG) shows a compositional bias: basic residues.

Belongs to the WUS homeobox family.

The protein resides in the nucleus. Potential transcription factor that plays a central role during developmental processes. The polypeptide is WUSCHEL-related homeobox 7 (WOX7) (Arabidopsis thaliana (Mouse-ear cress)).